Consider the following 216-residue polypeptide: Redox-sensing transcriptional repressor Rex 1 (216 aa).

The segment at residues 16–55 (LYYRYLRMLHDTGKNKVSSTELSEAVQVDSATIRRDFSYF) is a DNA-binding region (H-T-H motif). Residue 90 to 95 (GVGNLG) participates in NAD(+) binding.

This sequence belongs to the transcriptional regulatory Rex family. As to quaternary structure, homodimer.

The protein localises to the cytoplasm. In terms of biological role, modulates transcription in response to changes in cellular NADH/NAD(+) redox state. The protein is Redox-sensing transcriptional repressor Rex 1 of Enterococcus faecalis (strain ATCC 700802 / V583).